We begin with the raw amino-acid sequence, 331 residues long: D-alanine--D-alanine ligase (331 aa).

The ATP-grasp domain maps to lysine 112–alanine 314. An ATP-binding site is contributed by leucine 138 to threonine 193. Mg(2+) contacts are provided by aspartate 267, glutamate 281, and asparagine 283.

It belongs to the D-alanine--D-alanine ligase family. Mg(2+) is required as a cofactor. Requires Mn(2+) as cofactor.

The protein resides in the cytoplasm. It catalyses the reaction 2 D-alanine + ATP = D-alanyl-D-alanine + ADP + phosphate + H(+). The protein operates within cell wall biogenesis; peptidoglycan biosynthesis. Cell wall formation. This Verminephrobacter eiseniae (strain EF01-2) protein is D-alanine--D-alanine ligase.